We begin with the raw amino-acid sequence, 286 residues long: Beta-lactamase SHV-34 (286 aa).

Positions 1–21 (MRYFRLCIISLLATLPLAVHA) are cleaved as a signal peptide. Catalysis depends on serine 66, which acts as the Acyl-ester intermediate. Cysteines 73 and 119 form a disulfide. Glutamate 164 acts as the Proton acceptor in catalysis. 230–232 (KTG) provides a ligand contact to substrate.

This sequence belongs to the class-A beta-lactamase family.

The enzyme catalyses a beta-lactam + H2O = a substituted beta-amino acid. Hydrolyzes ceftazidime and cefotaxime. This is Beta-lactamase SHV-34 (bla) from Escherichia coli.